The primary structure comprises 466 residues: Vacuolar protein sorting-associated protein 30 (466 aa).

Positions 35–55 (SETNTDNSDNNKHNGENDRNI) are disordered. Over residues 43–53 (DNNKHNGENDR) the composition is skewed to basic and acidic residues. Residues 149 to 258 (DTLLEKLKEE…QMEHLSFIKD (110 aa)) are a coiled coil. The segment at 279–463 (LNIYNETFRI…LAFSTSRINK (185 aa)) is BARA. Residues 439–464 (WTTACKFLLTNIKWLLAFSTSRINKA) are required for membrane-association, autophagic function during starvation and normal autophagosome morphology.

It belongs to the beclin family. Component of the autophagy-specific VPS34 PI3-kinase complex I; and of the VPS34 PI3-kinase complex II.

The protein localises to the endosome membrane. The protein resides in the vacuole membrane. It is found in the preautophagosomal structure membrane. Its function is as follows. Required for cytoplasm to vacuole transport (Cvt), autophagy, nucleophagy, and mitophagy, as a part of the autophagy-specific VPS34 PI3-kinase complex I. This complex is essential to recruit the ATG8-phosphatidylinositol conjugate and the ATG12-ATG5 conjugate to the pre-autophagosomal structure. Also involved in endosome-to-Golgi retrograde transport as part of the VPS34 PI3-kinase complex II. The polypeptide is Vacuolar protein sorting-associated protein 30 (Kluyveromyces marxianus (strain DMKU3-1042 / BCC 29191 / NBRC 104275) (Yeast)).